Here is a 241-residue protein sequence, read N- to C-terminus: Uridylate kinase (241 aa).

Residue 15-18 (KMSG) coordinates ATP. An involved in allosteric activation by GTP region spans residues 23–28 (GAEGFG). Gly57 contributes to the UMP binding site. ATP is bound by residues Gly58 and Arg62. Residues Asp77 and 138-145 (TGNPLFTT) contribute to the UMP site. The ATP site is built by Thr165, Phe171, and Asp174.

It belongs to the UMP kinase family. Homohexamer.

The protein localises to the cytoplasm. The catalysed reaction is UMP + ATP = UDP + ADP. It participates in pyrimidine metabolism; CTP biosynthesis via de novo pathway; UDP from UMP (UMPK route): step 1/1. Allosterically activated by GTP. Inhibited by UTP. In terms of biological role, catalyzes the reversible phosphorylation of UMP to UDP. The protein is Uridylate kinase of Blochmanniella pennsylvanica (strain BPEN).